We begin with the raw amino-acid sequence, 309 residues long: Porphobilinogen deaminase (309 aa).

Cys241 is subject to S-(dipyrrolylmethanemethyl)cysteine.

Belongs to the HMBS family. In terms of assembly, monomer. The cofactor is dipyrromethane.

The catalysed reaction is 4 porphobilinogen + H2O = hydroxymethylbilane + 4 NH4(+). It functions in the pathway porphyrin-containing compound metabolism; protoporphyrin-IX biosynthesis; coproporphyrinogen-III from 5-aminolevulinate: step 2/4. Tetrapolymerization of the monopyrrole PBG into the hydroxymethylbilane pre-uroporphyrinogen in several discrete steps. The polypeptide is Porphobilinogen deaminase (Oceanobacillus iheyensis (strain DSM 14371 / CIP 107618 / JCM 11309 / KCTC 3954 / HTE831)).